A 618-amino-acid chain; its full sequence is Probable arginine--tRNA ligase, cytoplasmic (618 aa).

Interaction with tRNA regions lie at residues Glu60 to Thr61 and Asn104 to Arg109. L-arginine is bound by residues Glu146–Asn151, His160, Tyr359, Asp363, and Gln387. The 'HIGH' region motif lies at Ser149–His160. Residues Asp496–Ser510 are interaction with tRNA.

The protein belongs to the class-I aminoacyl-tRNA synthetase family.

The protein localises to the cytoplasm. The catalysed reaction is tRNA(Arg) + L-arginine + ATP = L-arginyl-tRNA(Arg) + AMP + diphosphate. Functionally, forms part of a macromolecular complex that catalyzes the attachment of specific amino acids to cognate tRNAs during protein synthesis. The chain is Probable arginine--tRNA ligase, cytoplasmic (mrs1) from Schizosaccharomyces pombe (strain 972 / ATCC 24843) (Fission yeast).